A 321-amino-acid chain; its full sequence is Ribosomal RNA small subunit methyltransferase H (321 aa).

Residues 40–42 (GGH), Asp60, Phe84, Asp106, and Gln113 contribute to the S-adenosyl-L-methionine site.

It belongs to the methyltransferase superfamily. RsmH family.

Its subcellular location is the cytoplasm. It carries out the reaction cytidine(1402) in 16S rRNA + S-adenosyl-L-methionine = N(4)-methylcytidine(1402) in 16S rRNA + S-adenosyl-L-homocysteine + H(+). Functionally, specifically methylates the N4 position of cytidine in position 1402 (C1402) of 16S rRNA. The sequence is that of Ribosomal RNA small subunit methyltransferase H from Pasteurella multocida (strain Pm70).